The primary structure comprises 192 residues: Imidazoleglycerol-phosphate dehydratase (192 aa).

The protein belongs to the imidazoleglycerol-phosphate dehydratase family.

The protein resides in the cytoplasm. The catalysed reaction is D-erythro-1-(imidazol-4-yl)glycerol 3-phosphate = 3-(imidazol-4-yl)-2-oxopropyl phosphate + H2O. The protein operates within amino-acid biosynthesis; L-histidine biosynthesis; L-histidine from 5-phospho-alpha-D-ribose 1-diphosphate: step 6/9. This chain is Imidazoleglycerol-phosphate dehydratase, found in Staphylococcus saprophyticus subsp. saprophyticus (strain ATCC 15305 / DSM 20229 / NCIMB 8711 / NCTC 7292 / S-41).